Reading from the N-terminus, the 176-residue chain is RNA pyrophosphohydrolase (176 aa).

One can recognise a Nudix hydrolase domain in the interval 6–149; that stretch reads GYRPNVGIIL…KRQVYQQALF (144 aa). The Nudix box motif lies at 38-59; that stretch reads GGIKHGESPEQAMFRELFEEVG.

The protein belongs to the Nudix hydrolase family. RppH subfamily. A divalent metal cation is required as a cofactor.

Functionally, accelerates the degradation of transcripts by removing pyrophosphate from the 5'-end of triphosphorylated RNA, leading to a more labile monophosphorylated state that can stimulate subsequent ribonuclease cleavage. This is RNA pyrophosphohydrolase from Aromatoleum aromaticum (strain DSM 19018 / LMG 30748 / EbN1) (Azoarcus sp. (strain EbN1)).